The primary structure comprises 336 residues: Porphobilinogen deaminase (336 aa).

Position 251 is an S-(dipyrrolylmethanemethyl)cysteine (Cys-251). 2 positions are modified to phosphoserine: Ser-327 and Ser-329.

This sequence belongs to the HMBS family. Dipyrromethane serves as cofactor.

The catalysed reaction is 4 porphobilinogen + H2O = hydroxymethylbilane + 4 NH4(+). Its pathway is porphyrin-containing compound metabolism; protoporphyrin-IX biosynthesis; coproporphyrinogen-III from 5-aminolevulinate: step 2/4. In terms of biological role, tetrapolymerization of the monopyrrole PBG into the hydroxymethylbilane pre-uroporphyrinogen in several discrete steps. This is Porphobilinogen deaminase (hem3) from Schizosaccharomyces pombe (strain 972 / ATCC 24843) (Fission yeast).